A 383-amino-acid chain; its full sequence is ATP phosphoribosyltransferase regulatory subunit (383 aa).

Belongs to the class-II aminoacyl-tRNA synthetase family. HisZ subfamily. As to quaternary structure, heteromultimer composed of HisG and HisZ subunits.

Its subcellular location is the cytoplasm. It participates in amino-acid biosynthesis; L-histidine biosynthesis; L-histidine from 5-phospho-alpha-D-ribose 1-diphosphate: step 1/9. Functionally, required for the first step of histidine biosynthesis. May allow the feedback regulation of ATP phosphoribosyltransferase activity by histidine. The polypeptide is ATP phosphoribosyltransferase regulatory subunit (Chromobacterium violaceum (strain ATCC 12472 / DSM 30191 / JCM 1249 / CCUG 213 / NBRC 12614 / NCIMB 9131 / NCTC 9757 / MK)).